The following is a 153-amino-acid chain: Arachidonate 5-lipoxygenase-activating protein (153 aa).

Topologically, residues 1–8 are lumenal; the sequence is MDQEAMGN. A helical transmembrane segment spans residues 9–30; that stretch reads IVLLAIVTLISVVQNAFFAHKV. Residues 31 to 52 are Cytoplasmic-facing; the sequence is EHESKTHNGRSFQRTGTPAFER. Residues 53–77 form a helical membrane-spanning segment; it reads VYTANQNCVDAYPTFLVVLWSAGLF. The Lumenal portion of the chain corresponds to 78-80; the sequence is CSQ. The chain crosses the membrane as a helical span at residues 81–102; the sequence is VPAAFAGLMYLFVRQKYFVGYL. Topologically, residues 103-107 are cytoplasmic; it reads GERTQ. The stretch at 108-115 is an intramembrane region; the sequence is STPGYIFG. The chain crosses the membrane as a helical span at residues 116-128; the sequence is KRIILFLFLMSLA. The Lumenal segment spans residues 129-153; the sequence is GIFNYFLILFFGSDFENYIKTITTT.

This sequence belongs to the MAPEG family. As to quaternary structure, homotrimer. Interacts with LTC4S and ALOX5.

The protein resides in the nucleus membrane. It localises to the endoplasmic reticulum membrane. Required for leukotriene biosynthesis by ALOX5 (5-lipoxygenase). Anchors ALOX5 to the membrane. Binds arachidonic acid, and could play an essential role in the transfer of arachidonic acid to ALOX5. Binds to MK-886, a compound that blocks the biosynthesis of leukotrienes. The chain is Arachidonate 5-lipoxygenase-activating protein (ALOX5AP) from Sus scrofa (Pig).